A 403-amino-acid polypeptide reads, in one-letter code: Leu/Ile/Val-binding protein homolog 8 (403 aa).

Positions methionine 1–alanine 26 are cleaved as a signal peptide.

Belongs to the leucine-binding protein family.

Its function is as follows. Component of an amino-acid transport system. This is Leu/Ile/Val-binding protein homolog 8 from Brucella melitensis biotype 1 (strain ATCC 23456 / CCUG 17765 / NCTC 10094 / 16M).